A 320-amino-acid polypeptide reads, in one-letter code: Cytochrome f (320 aa).

The N-terminal stretch at 1 to 35 is a signal peptide; it reads MENRNTFSWVKEQMTRSISVSIMIYVITQTSISNA. Heme is bound by residues Y36, C56, C59, and H60. A helical transmembrane segment spans residues 286–306; it reads VQGLLFFFASVILAQVFLVLK.

Belongs to the cytochrome f family. As to quaternary structure, the 4 large subunits of the cytochrome b6-f complex are cytochrome b6, subunit IV (17 kDa polypeptide, petD), cytochrome f and the Rieske protein, while the 4 small subunits are PetG, PetL, PetM and PetN. The complex functions as a dimer. It depends on heme as a cofactor.

The protein localises to the plastid. It localises to the chloroplast thylakoid membrane. Component of the cytochrome b6-f complex, which mediates electron transfer between photosystem II (PSII) and photosystem I (PSI), cyclic electron flow around PSI, and state transitions. The polypeptide is Cytochrome f (Agrostis stolonifera (Creeping bentgrass)).